Consider the following 553-residue polypeptide: Undecaprenyl phosphate-alpha-4-amino-4-deoxy-L-arabinose arabinosyl transferase (553 aa).

The next 12 membrane-spanning stretches (helical) occupy residues 8–28, 83–103, 111–131, 132–152, 176–196, 204–224, 255–275, 288–308, 317–337, 350–370, 380–400, and 407–427; these read LVLL…RALW, VRFG…WLAF, VAVL…VGTY, AVLD…FWLG, VMTK…PWVI, VLLF…PWAL, APFW…VALL, IESG…FFSI, ILPC…QLVA, TVFG…WGIA, VLKV…GYLT, and LWQW…GMIP.

Belongs to the glycosyltransferase 83 family.

It is found in the cell inner membrane. The catalysed reaction is 4-amino-4-deoxy-alpha-L-arabinopyranosyl di-trans,octa-cis-undecaprenyl phosphate + lipid IVA = lipid IIA + di-trans,octa-cis-undecaprenyl phosphate.. The protein operates within lipopolysaccharide metabolism; 4-amino-4-deoxy-beta-L-arabinose-lipid A biosynthesis. Functionally, catalyzes the transfer of the L-Ara4N moiety of the glycolipid undecaprenyl phosphate-alpha-L-Ara4N to lipid A. The modified arabinose is attached to lipid A and is required for resistance to polymyxin and cationic antimicrobial peptides. In Enterobacter sp. (strain 638), this protein is Undecaprenyl phosphate-alpha-4-amino-4-deoxy-L-arabinose arabinosyl transferase.